The chain runs to 604 residues: Transcriptional repressor rco-1 (604 aa).

Disordered regions lie at residues 87 to 110 (RGGA…PAIG) and 124 to 264 (GGQA…DRLP). Residues 144–163 (MPAPPGLQGPPPPPPPPSQQ) are compositionally biased toward pro residues. Low complexity-rich tracts occupy residues 164–177 (PPFQ…QGPG) and 190–209 (PGPA…PATP). Positions 210–229 (QINTPIPYNGGPAQSPQVPT) are enriched in polar residues. WD repeat units lie at residues 295–324 (QHES…QIYD), 342–372 (TGDL…RVWD), 384–414 (GHEQ…RLWD), 425–455 (SIED…RVWD), 469–499 (GHKD…KMWE), 523–553 (GHRD…QFWD), and 565–600 (GHKN…RIWS).

Functionally, represses transcription by RNA polymerase II. May be involved at several stages of conidiation and other growth and development processes. Appears to regulate genes that are expressed in asexual and sexual spore pathways. The protein is Transcriptional repressor rco-1 (rco-1) of Neurospora crassa (strain ATCC 24698 / 74-OR23-1A / CBS 708.71 / DSM 1257 / FGSC 987).